A 578-amino-acid polypeptide reads, in one-letter code: Probable multidrug ABC transporter ATP-binding protein YbhF (578 aa).

ABC transporter domains follow at residues 6 to 237 and 330 to 559; these read ITLN…LMTS and IEAK…PDPT. Residues 40 to 47 and 362 to 369 each bind ATP; these read GPDGAGKT and GPNGAGKS.

The protein belongs to the ABC transporter superfamily. As to quaternary structure, the complex is probably composed of two ATP-binding proteins (YbhF) and two transmembrane proteins (YbhR and YbhS).

Part of the ABC transporter complex YbhFSR that could be involved in efflux of cefoperazone. Probably responsible for energy coupling to the transport system. The polypeptide is Probable multidrug ABC transporter ATP-binding protein YbhF (ybhF) (Escherichia coli (strain K12)).